A 174-amino-acid chain; its full sequence is Cell division protein FtsL (174 aa).

Residues 1 to 38 (MLAAPRELSYIPQPVVSSKQSPRSGLSNRRRESRARQK) are Cytoplasmic-facing. A helical membrane pass occupies residues 39–59 (ILLLGLVLMGFVIGLSLTFLT). Over 60 to 174 (MQVLIKGYKI…EPARQAGAGV (115 aa)) the chain is Extracellular.

It belongs to the FtsL family.

The protein resides in the cell membrane. Functionally, essential cell division protein. This Moorella thermoacetica (strain ATCC 39073 / JCM 9320) protein is Cell division protein FtsL.